A 168-amino-acid polypeptide reads, in one-letter code: Photosystem I assembly protein Ycf3 (168 aa).

3 TPR repeats span residues 35-68 (AFTYYRDGMSAQSEGNYAEALQNYYEAMRLEIDP), 72-105 (SYILYNIGLIHTSNGEHTKALEYYFRALERNPFL), and 120-153 (GEQAIRQGDSEIAEAWFDQAAEYWKQAIALTPGN).

It belongs to the Ycf3 family.

Its subcellular location is the plastid. It is found in the chloroplast thylakoid membrane. Its function is as follows. Essential for the assembly of the photosystem I (PSI) complex. May act as a chaperone-like factor to guide the assembly of the PSI subunits. This is Photosystem I assembly protein Ycf3 from Helianthus annuus (Common sunflower).